We begin with the raw amino-acid sequence, 257 residues long: uncharacterized protein (257 aa).

The chain crosses the membrane as a helical span at residues 6–26; the sequence is IFWLNLAAIIIISIVVSGDMF.

The protein belongs to the staphylococcal tandem lipoprotein family.

The protein localises to the cell membrane. This is an uncharacterized protein from Staphylococcus aureus (strain COL).